Reading from the N-terminus, the 295-residue chain is Small ribosomal subunit protein uS2 (295 aa).

This sequence belongs to the universal ribosomal protein uS2 family.

The polypeptide is Small ribosomal subunit protein uS2 (Rickettsia typhi (strain ATCC VR-144 / Wilmington)).